The primary structure comprises 435 residues: MGKQEVKTRNGERVAIVAGLRTPFARQSTEFSQVPAVDLGKMVVSEMLARTDIDPKLIEQVVFGQVVQMPEAPNIAREIVLGTGMNIHTDAYSVTRACATSFQAAVNVAESIMAGTIEIGIAGGADSSSVLPIGVSKKLAANLLALSKTKTLGQKLNILKSLSFKDLMPVPPAVAEYSTGLSMGQTAEQMAKTHGISRAEQDALAHRSHTLASQAWKEGKIQGEVMTAFPEPYKKWISEDNNVRHDSTLEGYAKLRPAFDRQYGSVTAANSTPLTDGGAAVMLMREGKAKELGMEILGYIRGYAFSAIGVEKDMLMGPTYATAKVLENTGLELSDLTLIDMHEAFAAQALANVKMFASDKFAQENLGRSKAIGEIDMDKFNVLGGSIAYGHPFAATGARMMTQTLRELKRRGGGIALNTACAAGGLGAAMILEVE.

C98 (acyl-thioester intermediate) is an active-site residue. Catalysis depends on proton acceptor residues H391 and C421.

It belongs to the thiolase-like superfamily. Thiolase family. Heterotetramer of two alpha chains (FadJ) and two beta chains (FadI).

It is found in the cytoplasm. The catalysed reaction is an acyl-CoA + acetyl-CoA = a 3-oxoacyl-CoA + CoA. It functions in the pathway lipid metabolism; fatty acid beta-oxidation. Functionally, catalyzes the final step of fatty acid oxidation in which acetyl-CoA is released and the CoA ester of a fatty acid two carbons shorter is formed. The sequence is that of 3-ketoacyl-CoA thiolase from Vibrio parahaemolyticus serotype O3:K6 (strain RIMD 2210633).